A 267-amino-acid chain; its full sequence is Transcription factor HES-1-A (267 aa).

The disordered stretch occupies residues 1–43 (MPADVMEKNSSSPVAATPASVSNTPDKPKTASEHRKSSKPIME). Residues 10–22 (SSSPVAATPASVS) show a composition bias toward low complexity. A compositionally biased stretch (basic and acidic residues) spans 26-35 (DKPKTASEHR). The bHLH domain maps to 34–91 (HRKSSKPIMEKRRRARINESLGQLKTLILDALKKDSSRHSKLEKADILEMTVKHLRNL). An Orange domain is found at 110–143 (YRAGFSECMNEVTRFLSTCEGVNTDVRTRLLGHL). Residues 264 to 267 (WRPW) carry the WRPW motif motif.

In terms of assembly, transcription repression requires formation of a complex with a corepressor protein of the Groucho/TLE family. Interacts with the bHLH protein hes2, and binds DNA in the form of a heterodimer with the bHLH protein hey1/hrt1. Interacts with the bHLH protein hes6; this interaction may inhibit the transcriptional repressor activity. In terms of tissue distribution, starting from late neurula stage, weakly expressed in midline neural cells, where expression is restricted to the superficial layer of the prospective floorplate. Expressed in the posterior somitic mesoderm (PSM) at tailbud stage. During early tailbud stages, broadly expressed within the pronephric mesoderm both around and inside the developing pronephros. During late tailbud to early tadpole stages, expressed more ventrally in the pronephros, and although initially expressed in both the lateral and medial layers, by these later stages expression is predominantly in the lateral layer. Pronephric expression is no longer detectable in late tadpoles (stage 35).

It localises to the nucleus. Functionally, transcriptional repressor of a subset of early mesodermal genes including myod1 and t/bra. Binds DNA on N-box motifs: 5'-CACNAG-3'. Acts as a negative regulator of myogenesis, mediating Notch signaling to repress expression of myod1. This Xenopus laevis (African clawed frog) protein is Transcription factor HES-1-A (hes1-a).